The sequence spans 373 residues: Chaperone protein DnaJ (373 aa).

Residues 5–70 form the J domain; the sequence is DYYEVLGVHR…QQRVIYDQYG (66 aa). Residues 136-214 form a CR-type zinc finger; sequence GLETKIQIPR…CHGSGRVRGK (79 aa). Zn(2+) contacts are provided by cysteine 149, cysteine 152, cysteine 166, cysteine 169, cysteine 188, cysteine 191, cysteine 202, and cysteine 205. CXXCXGXG motif repeat units follow at residues 149-156, 166-173, 188-195, and 202-209; these read CGTCDGIG, CPTCQGAG, CPECNGEG, and CEECHGSG.

It belongs to the DnaJ family. As to quaternary structure, homodimer. Zn(2+) serves as cofactor.

The protein localises to the cytoplasm. In terms of biological role, participates actively in the response to hyperosmotic and heat shock by preventing the aggregation of stress-denatured proteins and by disaggregating proteins, also in an autonomous, DnaK-independent fashion. Unfolded proteins bind initially to DnaJ; upon interaction with the DnaJ-bound protein, DnaK hydrolyzes its bound ATP, resulting in the formation of a stable complex. GrpE releases ADP from DnaK; ATP binding to DnaK triggers the release of the substrate protein, thus completing the reaction cycle. Several rounds of ATP-dependent interactions between DnaJ, DnaK and GrpE are required for fully efficient folding. Also involved, together with DnaK and GrpE, in the DNA replication of plasmids through activation of initiation proteins. In Syntrophotalea carbinolica (strain DSM 2380 / NBRC 103641 / GraBd1) (Pelobacter carbinolicus), this protein is Chaperone protein DnaJ.